The sequence spans 160 residues: H/ACA ribonucleoprotein complex subunit 2 (160 aa).

The residue at position 15 (Ser-15) is a Phosphoserine. Position 23 is a phosphothreonine (Thr-23).

Belongs to the eukaryotic ribosomal protein eL8 family. In terms of assembly, component of the box H/ACA small nucleolar ribonucleoprotein (H/ACA snoRNP) complex consisting of Nop60B, Gar1, NPH2 and Nop10, and associated with H/ACA-type snoRNAs.

It is found in the nucleus. Its subcellular location is the nucleolus. Its function is as follows. Component of the box H/ACA small nucleolar ribonucleoprotein (H/ACA snoRNP) complex, which catalyzes pseudouridylation of rRNA. This involves the isomerization of uridine such that the ribose is subsequently attached to C5, instead of the normal N1. Pseudouridine ('psi') residues may serve to stabilize the conformation of rRNAs. Required for ribosome biogenesis. H/ACA snoRNP complex-dependent ribosome biogenesis is important in female germline cell differentiation during oogenesis. This chain is H/ACA ribonucleoprotein complex subunit 2, found in Drosophila melanogaster (Fruit fly).